The following is a 506-amino-acid chain: Protein spinster homolog 1 (506 aa).

Positions 1–42 are disordered; sequence MSQADADITPFFADDNEGEGPVENGVGSPLPEDEEEESPSGV. Low complexity predominate over residues 21–30; that stretch reads PVENGVGSPL. Transmembrane regions (helical) follow at residues 52-71, 87-107, 115-135, 149-169, 176-196, 207-227, 266-286, 310-330, 344-364, 373-393, 408-428, and 450-470; these read IVLC…VAGV, GLLQ…FGYL, LIMC…SFIG, VGVG…DLFV, MLSI…IVGS, WALR…MLVV, FGFT…PAFL, LIFG…GVQA, LVCA…IMFA, VFIF…ADIL, FQIV…IGVV, and LLCS…AVFI.

This sequence belongs to the major facilitator superfamily. Spinster (TC 2.A.1.49) family. Expressed in yolk cells.

The protein localises to the lysosome membrane. It catalyses the reaction a 1-acyl-sn-glycero-3-phosphocholine(out) + H(+)(out) = a 1-acyl-sn-glycero-3-phosphocholine(in) + H(+)(in). The catalysed reaction is a 1-acyl-sn-glycero-3-phosphoethanolamine(out) + H(+)(out) = a 1-acyl-sn-glycero-3-phosphoethanolamine(in) + H(+)(in). The enzyme catalyses a 1-O-(1Z-alkenyl)-sn-glycero-3-phosphocholine(out) + H(+)(out) = a 1-O-(1Z-alkenyl)-sn-glycero-3-phosphocholine(in) + H(+)(in). It carries out the reaction a 1-O-(1Z-alkenyl)-sn-glycero-3-phosphoethanolamine(out) + H(+)(out) = a 1-O-(1Z-alkenyl)-sn-glycero-3-phosphoethanolamine(in) + H(+)(in). Its function is as follows. Mediates the rate-limiting, proton-dependent, lysosomal efflux of lysophospholipids. Selective for zwitterionic headgroups such as lysophosphatidylcholine (LPC) and lysophosphatidylethanolamine (LPE). Essential player in lysosomal homeostasis. Critical for embryogenesis. Involved in the regulation of developmental senescence. This chain is Protein spinster homolog 1 (spns1), found in Danio rerio (Zebrafish).